The sequence spans 402 residues: Putative nickel insertion protein (402 aa).

Belongs to the LarC family.

The polypeptide is Putative nickel insertion protein (Synechococcus elongatus (strain ATCC 33912 / PCC 7942 / FACHB-805) (Anacystis nidulans R2)).